The following is a 607-amino-acid chain: Dopamine receptor 3 (607 aa).

Over 1–23 (MLAGQHHVTDIESPLMVVLWRVA) the chain is Extracellular. A helical transmembrane segment spans residues 24–44 (AGVFLPLVPTMAVFGNVLVIM). Over 45–58 (SVFRERSLQTVTNM) the chain is Cytoplasmic. The chain crosses the membrane as a helical span at residues 59–79 (LIVSLAVSDFMVAIGVMSFGV). Residues 80–96 (YYEWNDFKWGLGSFFCH) are Extracellular-facing. Cysteine 95 and cysteine 173 form a disulfide bridge. The chain crosses the membrane as a helical span at residues 97–117 (VYQALDVACSTASILNLLAIS). Residues 118 to 141 (LDRYIAIGHPISYAQYGARGGRAM) are Cytoplasmic-facing. A helical membrane pass occupies residues 142–162 (ISITIVWGVSVAVALPLLLGV). Residues 163–182 (NPMEENDLQECELANPYFNM) are Extracellular-facing. A helical transmembrane segment spans residues 183–203 (ISSIFSFFIPCIAMIILYTII). At 204–523 (FRRLRQRERA…TKQMRREHKA (320 aa)) the chain is on the cytoplasmic side. Positions 402–435 (VPSIQDEKKLSQKSNDLPFSHQNGTHKQKLLPNP) are disordered. Residues 413 to 424 (QKSNDLPFSHQN) are compositionally biased toward polar residues. A helical transmembrane segment spans residues 524–544 (TVTLAVVLAVFLFCWLPFFVL). At 545-558 (HLSNSICLIIDENS) the chain is on the extracellular side. Residues 559-579 (ACVGFLPLYLATWLGYLNSSL) form a helical membrane-spanning segment. The Cytoplasmic portion of the chain corresponds to 580–607 (NPLIYTVFDQRFRNAFRNILSCGIFKKR).

Belongs to the G-protein coupled receptor 1 family. Expressed in the neurons of the head, ventral cord and tail with weak expression observed in body wall muscles and PVD neurons. In the ventral cord, expressed strongly in GABAergic neurons with weaker expression in cholinergic motor neurons. Expressed in cholinergic SIA neurons and octopaminergic RIC neurons. In males, expressed in the dorsal and ventral spicule protractor and retractor muscles, and the sensory post-cloacal sensilla B (PCB) neuron. Expressed in the head acetylcholine neurons. Expressed in the AVA, AVB, AVD and AVE command interneurons. Expressed in premotor interneurons.

It is found in the cell membrane. G-protein coupled receptor which binds to the neurotransmitter dopamine with high affinity leading to the activation of an associated G-protein and downstream signaling pathways. Couples to G-proteins to inhibit adenylate cyclase (AC) activity and cAMP production. Antagonizes the D1-like dopamine receptor dop-1 to negatively regulate the rate of locomotion. Negatively regulates locomotion through the activation of goa-1 subunit proteins which inactivates the unc-77/nca-1 and nca-2 ion-channels in the command interneurons. Inhibits early-stage swimming by modulating the unc-77/nca-1 and nca-2 ion channels of premotor interneurons. In GABAergic, RIC, and SIA neurons, antagonizes the function of dop-1 to play a role in behavioral plasticity and regulate the decision-making process when conflicting alternatives are present. Antagonizes octopamine signaling in response to food by promoting the dopamine-mediated suppression of crh-1/CREB1 transcription factor activation in cholinergic SIA neurons. This is most likely in association with the G(o)-alpha G-protein subunit goa-1. Promotes male mating behavior by antagonizing acetylcholine signaling to control the protrusion of copulatory spicules from the tail of males during hermaphrodite vulval location. Under mitochondria stress, plays a role in bacterial preference, resulting in learned avoidance behavior. In Caenorhabditis elegans, this protein is Dopamine receptor 3.